A 507-amino-acid chain; its full sequence is Alkyl hydroperoxide reductase subunit F (507 aa).

An FAD-binding site is contributed by 207–222 (DVLIVGGGPASGSAAI). Cysteines 335 and 338 form a disulfide. Residue 347 to 361 (DVAVIGGGNSGVEAA) participates in NAD(+) binding. An FAD-binding site is contributed by 467-477 (TNVPGIFAAGD).

The protein belongs to the class-II pyridine nucleotide-disulfide oxidoreductase family. Homodimer. FAD serves as cofactor.

Its function is as follows. Serves to protect the cell against DNA damage by alkyl hydroperoxides. It can use either NADH or NADPH as electron donor for direct reduction of redox dyes or of alkyl hydroperoxides when combined with the AhpC protein. In Staphylococcus epidermidis (strain ATCC 12228 / FDA PCI 1200), this protein is Alkyl hydroperoxide reductase subunit F (ahpF).